The following is a 533-amino-acid chain: CTP synthase (533 aa).

The tract at residues 1-265 (MTKFIFVTGG…ARYLVRRLGL (265 aa)) is amidoligase domain. Ser13 provides a ligand contact to CTP. Ser13 provides a ligand contact to UTP. 14–19 (GLGKGI) lines the ATP pocket. Tyr54 is an L-glutamine binding site. Asp71 contributes to the ATP binding site. Mg(2+) contacts are provided by Asp71 and Glu139. CTP-binding positions include 146–148 (DIE), 186–191 (KTKPTQ), and Lys222. Residues 186–191 (KTKPTQ) and Lys222 contribute to the UTP site. The Glutamine amidotransferase type-1 domain maps to 290–532 (EIAIVGKYVK…VRAARERKYG (243 aa)). Gly351 is an L-glutamine binding site. Cys378 functions as the Nucleophile; for glutamine hydrolysis in the catalytic mechanism. Residues 379-382 (FGFQ), Glu402, and Arg459 each bind L-glutamine. Catalysis depends on residues His505 and Glu507.

This sequence belongs to the CTP synthase family. In terms of assembly, homotetramer.

The catalysed reaction is UTP + L-glutamine + ATP + H2O = CTP + L-glutamate + ADP + phosphate + 2 H(+). It carries out the reaction L-glutamine + H2O = L-glutamate + NH4(+). The enzyme catalyses UTP + NH4(+) + ATP = CTP + ADP + phosphate + 2 H(+). It participates in pyrimidine metabolism; CTP biosynthesis via de novo pathway; CTP from UDP: step 2/2. With respect to regulation, allosterically activated by GTP, when glutamine is the substrate; GTP has no effect on the reaction when ammonia is the substrate. The allosteric effector GTP functions by stabilizing the protein conformation that binds the tetrahedral intermediate(s) formed during glutamine hydrolysis. Inhibited by the product CTP, via allosteric rather than competitive inhibition. Functionally, catalyzes the ATP-dependent amination of UTP to CTP with either L-glutamine or ammonia as the source of nitrogen. Regulates intracellular CTP levels through interactions with the four ribonucleotide triphosphates. In Thermococcus gammatolerans (strain DSM 15229 / JCM 11827 / EJ3), this protein is CTP synthase.